The chain runs to 181 residues: Large ribosomal subunit protein uL5 (181 aa).

This sequence belongs to the universal ribosomal protein uL5 family. Part of the 50S ribosomal subunit; contacts the 5S rRNA and probably tRNA. Forms a bridge to the 30S subunit in the 70S ribosome.

This is one of the proteins that bind and probably mediate the attachment of the 5S RNA into the large ribosomal subunit, where it forms part of the central protuberance. In the 70S ribosome it contacts protein S13 of the 30S subunit (bridge B1b), connecting the 2 subunits; this bridge is implicated in subunit movement. May contact the P site tRNA; the 5S rRNA and some of its associated proteins might help stabilize positioning of ribosome-bound tRNAs. The chain is Large ribosomal subunit protein uL5 from Methanococcus vannielii.